Here is a 525-residue protein sequence, read N- to C-terminus: MVSRPEPEGEAMDAELAVAPPGCSHLGSFKVDNWKQNLRAIYQCFVWSGTAEARKRKAKSCICHVCGVHLNRLHSCLYCVFFGCFTKKHIHEHAKAKRHNLAIDLMYGGIYCFLCQDYIYDKDMEIIAKEEQRKAWKMQGVGEKFSTWEPTKRELELLKHNPKRRKITSNCTIGLRGLINLGNTCFMNCIVQALTHTPLLRDFFLSDRHRCEMQSPSSCLVCEMSSLFQEFYSGHRSPHIPYKLLHLVWTHARHLAGYEQQDAHEFLIAALDVLHRHCKGDDNGKKANNPNHCNCIIDQIFTGGLQSDVTCQVCHGVSTTIDPFWDISLDLPGSSTPFWPLSPGSEGNVVNGESHVSGTTTLTDCLRRFTRPEHLGSSAKIKCSGCHSYQESTKQLTMKKLPIVACFHLKRFEHSAKLRRKITTYVSFPLELDMTPFMASSKESRMNGQYQQPTDSLNNDNKYSLFAVVNHQGTLESGHYTSFIRQHKDQWFKCDDAIITKASIKDVLDSEGYLLFYHKQFLEYE.

Residues 21-138 (PGCSHLGSFK…KEEQRKAWKM (118 aa)) form a UBP-type zinc finger. Zn(2+) is bound by residues Cys23, His25, Cys63, Cys66, Cys76, Cys79, Cys84, His89, His93, His99, Cys112, and Cys115. N6-acetyllysine is present on Lys129. Thr147 is modified (phosphothreonine; by CDK1). A USP domain is found at 176–520 (RGLINLGNTC…EGYLLFYHKQ (345 aa)). Cys185 (nucleophile) is an active-site residue. Residue Ser237 is modified to Phosphoserine; by CDK1. His479 acts as the Proton acceptor in catalysis.

This sequence belongs to the peptidase C19 family. UBP8 subfamily. Component of some SAGA transcription coactivator-HAT complexes, at least composed of ATXN7, ATXN7L3, ENY2, GCN5L2, SUPT3H, TAF10, TRRAP and USP22. Within the SAGA complex, ATXN7L3, ENY2 and USP22 form a subcomplex required for histone deubiquitination. Interacts directly with ATXN7L3; leading to its recruitment to the SAGA complex. Interacts with ATXN7L3 and weakly with ATXN7L3B. Interacts with MED1. In terms of processing, phosphorylated in G2/M phase, but not in G1 phase by CDK1. Post-translationally, ubiquitinated and subsequently degraded in a CDC20-dependent manner. In terms of tissue distribution, moderately expressed in various tissues including heart and skeletal muscle, and weakly expressed in lung and liver.

Its subcellular location is the nucleus. It localises to the cytoplasm. The catalysed reaction is Thiol-dependent hydrolysis of ester, thioester, amide, peptide and isopeptide bonds formed by the C-terminal Gly of ubiquitin (a 76-residue protein attached to proteins as an intracellular targeting signal).. In terms of biological role, deubiquitinase that plays a role in several cellular processes including transcriptional regulation, cell cycle progression or innate immunity. As part of the transcription regulatory histone acetylation (HAT) complex SAGA, catalyzes the deubiquitination of both histones H2A and H2B, thereby acting as a transcriptional coactivator. Recruited to specific gene promoters by activators such as MYC, where it is required for transcription. Facilitates cell-cycle progression by stabilizing CCNB1 and antagonizing its proteasome-mediated degradation in a cell cycle-specific manner. Modulates cell cycle progression and apoptosis also by antagonizing TP53 transcriptional activation through deacetylase SIRT1 stabilization. Plays multiple roles in immunity and inflammation. Participates in antiviral response by deubiquitinating the importin KPNA2, leading to IRF3 nuclear translocation and subsequent type I interferon production. Acts as a central regulator of type III IFN signaling by negatively regulating STING1 activation and ubiquitination. Inhibits NLRP3 inflammasome activation by promoting NLRP3 degradation through ATG5-dependent autophagy. Deubiquitinates CD274 to induce its stabilization and thereby participates in maintenance of immune tolerance to self. Controls necroptotic cell death by regulating RIPK3 phosphorylation and ubiquitination. During bacterial infection, promotes pro-inflammatory response by targeting TRAF6 and removing its 'Lys-48'-linked polyubiquitination. This chain is Ubiquitin carboxyl-terminal hydrolase 22 (USP22), found in Homo sapiens (Human).